We begin with the raw amino-acid sequence, 510 residues long: Bifunctional purine biosynthesis protein PurH (510 aa).

The MGS-like domain maps to 1–143; sequence MTKRALISVS…KNHDAVLVLV (143 aa).

Belongs to the PurH family.

The enzyme catalyses (6R)-10-formyltetrahydrofolate + 5-amino-1-(5-phospho-beta-D-ribosyl)imidazole-4-carboxamide = 5-formamido-1-(5-phospho-D-ribosyl)imidazole-4-carboxamide + (6S)-5,6,7,8-tetrahydrofolate. It carries out the reaction IMP + H2O = 5-formamido-1-(5-phospho-D-ribosyl)imidazole-4-carboxamide. It functions in the pathway purine metabolism; IMP biosynthesis via de novo pathway; 5-formamido-1-(5-phospho-D-ribosyl)imidazole-4-carboxamide from 5-amino-1-(5-phospho-D-ribosyl)imidazole-4-carboxamide (10-formyl THF route): step 1/1. It participates in purine metabolism; IMP biosynthesis via de novo pathway; IMP from 5-formamido-1-(5-phospho-D-ribosyl)imidazole-4-carboxamide: step 1/1. The sequence is that of Bifunctional purine biosynthesis protein PurH from Deinococcus radiodurans (strain ATCC 13939 / DSM 20539 / JCM 16871 / CCUG 27074 / LMG 4051 / NBRC 15346 / NCIMB 9279 / VKM B-1422 / R1).